A 308-amino-acid polypeptide reads, in one-letter code: MRRDVSSKASPKVAMMMGGTSSERAVSLSSGRECGAALRAEGFEVIDLDAGPDLAARLEDLRPDVVFNALHGRWGEDGCVQGLLEWLRIPYTHSGVLASALAMDKERTKAAYAAAGLPIATSGLFTRAQIAARHVMPPPYVIKPYNEGSSVGVYLVPEGAEAAPELADDLPDTLMVEAFVPGRELTVTVQGDRALCVTDIVTEGWYDYDAKYVPGGSRHVLPAEVPGDVYDACMAHAETAHRVLGCRGISRTDFRWDPRRSLDGLALLETNTQPGMTPTSLTPEQAQHVGLGFGALCRWIVEDASCDR.

The ATP-grasp domain maps to 109–302 (KAAYAAAGLP…FGALCRWIVE (194 aa)). 136-186 (MPPPYVIKPYNEGSSVGVYLVPEGAEAAPELADDLPDTLMVEAFVPGRELT) contributes to the ATP binding site. Mg(2+)-binding residues include Asp-253, Glu-269, and Asn-271.

It belongs to the D-alanine--D-alanine ligase family. Mg(2+) is required as a cofactor. The cofactor is Mn(2+).

The protein resides in the cytoplasm. It carries out the reaction 2 D-alanine + ATP = D-alanyl-D-alanine + ADP + phosphate + H(+). The protein operates within cell wall biogenesis; peptidoglycan biosynthesis. Cell wall formation. This Dinoroseobacter shibae (strain DSM 16493 / NCIMB 14021 / DFL 12) protein is D-alanine--D-alanine ligase.